The following is a 561-amino-acid chain: Putative transport protein YbjL (561 aa).

The next 5 membrane-spanning stretches (helical) occupy residues 8 to 28, 32 to 52, 66 to 86, 94 to 114, and 158 to 178; these read LLNG…LCLG, LGSV…LLGQ, FMLF…SIFF, MLAL…GKLF, and NLSL…IVGA. RCK C-terminal domains lie at 200-288 and 292-373; these read RGLD…SLRN and VFDR…RIGF. 5 helical membrane-spanning segments follow: residues 383-403, 406-426, 447-467, 475-495, and 540-560; these read LLAF…TFQF, FSFG…LGFL, FGLM…ISNG, MLIA…LFGA, and AIAN…WPGL.

It belongs to the AAE transporter (TC 2.A.81) family. YbjL subfamily.

The protein resides in the cell membrane. The protein is Putative transport protein YbjL of Salmonella gallinarum (strain 287/91 / NCTC 13346).